The chain runs to 1056 residues: Multidrug resistance protein MdtB (1056 aa).

Transmembrane regions (helical) follow at residues 16–36 (FILR…AGII), 342–362 (DVQF…YVFL), 373–393 (IAVP…GFSV), 396–416 (LTLM…IVVI), 440–460 (IGFT…PLLF), 472–492 (FAIT…TLTP), 537–557 (WITL…YLTI), 869–889 (LILA…ESFI), 890–910 (HPVT…LALM), 911–931 (VGGY…IGIV), 968–988 (ILMT…STGI), and 1002–1022 (GGLI…YLLF). The interval 1037-1056 (LQSQNQRELDHSPVNHQEPL) is disordered. Residues 1043–1056 (RELDHSPVNHQEPL) are compositionally biased toward basic and acidic residues.

This sequence belongs to the resistance-nodulation-cell division (RND) (TC 2.A.6) family. MdtB subfamily. Part of a tripartite efflux system composed of MdtA, MdtB and MdtC. MdtB forms a heteromultimer with MdtC.

It is found in the cell inner membrane. The protein is Multidrug resistance protein MdtB of Xenorhabdus bovienii (strain SS-2004) (Xenorhabdus nematophila subsp. bovienii).